A 412-amino-acid chain; its full sequence is Aspartate aminotransferase, cytoplasmic (412 aa).

Ala2 carries the N-acetylalanine modification. Gly38, Trp140, and Asn194 together coordinate L-aspartate. Lys258 is modified (N6-(pyridoxal phosphate)lysine). Arg386 serves as a coordination point for L-aspartate.

The protein belongs to the class-I pyridoxal-phosphate-dependent aminotransferase family. Homodimer. Requires pyridoxal 5'-phosphate as cofactor.

It localises to the cytoplasm. The catalysed reaction is L-aspartate + 2-oxoglutarate = oxaloacetate + L-glutamate. It catalyses the reaction L-cysteine + 2-oxoglutarate = 2-oxo-3-sulfanylpropanoate + L-glutamate. It carries out the reaction (2S)-2-aminobutanoate + 2-oxoglutarate = 2-oxobutanoate + L-glutamate. The enzyme catalyses 3-sulfino-L-alanine + 2-oxoglutarate = 3-sulfinopyruvate + L-glutamate. In terms of biological role, biosynthesis of L-glutamate from L-aspartate or L-cysteine. Important regulator of levels of glutamate, the major excitatory neurotransmitter of the vertebrate central nervous system. Acts as a scavenger of glutamate in brain neuroprotection. The aspartate aminotransferase activity is involved in hepatic glucose synthesis during development and in adipocyte glyceroneogenesis. Using L-cysteine as substrate, regulates levels of mercaptopyruvate, an important source of hydrogen sulfide. Mercaptopyruvate is converted into H(2)S via the action of 3-mercaptopyruvate sulfurtransferase (3MST). Hydrogen sulfide is an important synaptic modulator and neuroprotectant in the brain. The protein is Aspartate aminotransferase, cytoplasmic of Gallus gallus (Chicken).